A 449-amino-acid polypeptide reads, in one-letter code: UDP-N-acetylmuramoylalanine--D-glutamate ligase (449 aa).

118–124 (GTNGKTT) is an ATP binding site.

Belongs to the MurCDEF family.

The protein resides in the cytoplasm. The catalysed reaction is UDP-N-acetyl-alpha-D-muramoyl-L-alanine + D-glutamate + ATP = UDP-N-acetyl-alpha-D-muramoyl-L-alanyl-D-glutamate + ADP + phosphate + H(+). It functions in the pathway cell wall biogenesis; peptidoglycan biosynthesis. Its function is as follows. Cell wall formation. Catalyzes the addition of glutamate to the nucleotide precursor UDP-N-acetylmuramoyl-L-alanine (UMA). The polypeptide is UDP-N-acetylmuramoylalanine--D-glutamate ligase (Staphylococcus aureus (strain Mu3 / ATCC 700698)).